The following is a 547-amino-acid chain: MAAKLIKFDQEARNCILKGVNTLADAVKVTLGPKGRNVVIEKSYGAPLITKDGVTVAKEIELEDKFENMGAQLVKEVASKTSDVAGDGTTTATVLAQAIYRQGAKLVAAGHNPMEIKRGLDQAVEALVAELKNISKPIKDHKEIAQVGTISANNDKTIGDIIAEAMEKVGKEGVITVEEAKAMETTLETVEGMQFDRGYLSPYFVTDPERMEAAMDNVAILIHDKKIANMKDLLPVLEQTAKSGRPLLIIAEDIEGEALATLVVNKLRGVLNVCAVKAPGFGDRRKAMLEDIAILTGGKVISEEVGFKLENTTLDMLGQAKKITVDKDNTTIIDGFGAEADIQGRVKMIRAQIDETSSDYDREKLQERLAKLVGGVAVIKVGAATEIEMKEKKARVEDALHATRAAVDEGIVPGGGVAYLRAMKVLENLQLAPEQQFGVNVIKRALEEPIRQISQNAGVDGSIVVDKVKNGKDAFGYNAADDVYVDMIEAGIIDPTKVSRSALQNAASVAGLMMTTEAMIADKPKEEGAMPAMPGGMGGMGGMGGMM.

ATP contacts are provided by residues 30 to 33 (TLGP), K51, 87 to 91 (DGTTT), G415, 478 to 480 (NAA), and D494.

The protein belongs to the chaperonin (HSP60) family. Forms a cylinder of 14 subunits composed of two heptameric rings stacked back-to-back. Interacts with the co-chaperonin GroES.

The protein localises to the cytoplasm. The enzyme catalyses ATP + H2O + a folded polypeptide = ADP + phosphate + an unfolded polypeptide.. Functionally, together with its co-chaperonin GroES, plays an essential role in assisting protein folding. The GroEL-GroES system forms a nano-cage that allows encapsulation of the non-native substrate proteins and provides a physical environment optimized to promote and accelerate protein folding. This chain is Chaperonin GroEL, found in Geobacter sp. (strain M21).